Consider the following 325-residue polypeptide: NADH-quinone oxidoreductase subunit H (325 aa).

The next 8 membrane-spanning stretches (helical) occupy residues 11-31 (ILLT…CGAF), 81-101 (FIFT…FAIV), 114-134 (IGIL…LFAG), 154-174 (VSYE…AGSF), 186-206 (MWNI…GVAV), 237-257 (FFVG…TLFF), 265-285 (LPSF…FILI), and 304-324 (ICLP…LYNA).

This sequence belongs to the complex I subunit 1 family. As to quaternary structure, NDH-1 is composed of 13 different subunits. Subunits NuoA, H, J, K, L, M, N constitute the membrane sector of the complex.

It localises to the cell inner membrane. It catalyses the reaction a quinone + NADH + 5 H(+)(in) = a quinol + NAD(+) + 4 H(+)(out). Functionally, NDH-1 shuttles electrons from NADH, via FMN and iron-sulfur (Fe-S) centers, to quinones in the respiratory chain. The immediate electron acceptor for the enzyme in this species is believed to be ubiquinone. Couples the redox reaction to proton translocation (for every two electrons transferred, four hydrogen ions are translocated across the cytoplasmic membrane), and thus conserves the redox energy in a proton gradient. This subunit may bind ubiquinone. This is NADH-quinone oxidoreductase subunit H from Proteus mirabilis (strain HI4320).